The chain runs to 554 residues: Protein translocase subunit SecD (554 aa).

6 helical membrane-spanning segments follow: residues 10 to 30 (LVIL…MFYA), 392 to 412 (AGMV…IASY), 414 to 434 (LFGF…FAVM), 435 to 455 (GAIG…TIGT), 491 to 511 (AIID…VLGA), and 516 to 536 (GFAV…IWVV).

The protein belongs to the SecD/SecF family. SecD subfamily. As to quaternary structure, forms a complex with SecF. Part of the essential Sec protein translocation apparatus which comprises SecA, SecYEG and auxiliary proteins SecDF-YajC and YidC.

Its subcellular location is the cell inner membrane. Its function is as follows. Part of the Sec protein translocase complex. Interacts with the SecYEG preprotein conducting channel. SecDF uses the proton motive force (PMF) to complete protein translocation after the ATP-dependent function of SecA. This chain is Protein translocase subunit SecD, found in Rhodobacter capsulatus (strain ATCC BAA-309 / NBRC 16581 / SB1003).